Consider the following 523-residue polypeptide: CRPPSSPSLSWPPGLRSPALPRAVACARGRSAKRDVAAKRLRSRSPRMDATTGDFTALQKAVKQMATKAGTEGLVHGIKNPELRQLLTEIFMKDPEQQEFMQAVREVAVSLQPVFEKRPELLPIFKQIVEPERVITFRVSWLDDAGNLQVNRGFRVQYSSAIGPYKGGLRFHPSVNLSIMKFLAFEQIFKNSLTTLPMGGGKGGSDFDPKGKSDAEVMRFCQSFMTELQRHISYVQDVPAGDIGVGAREIGYLFGQYKRITKNYTGVLTGKGQEYGGSEIRPEATGYGAVLFVENVLKDKGESLKGKRCLVSGAGNVAQYCAELLLEKGAIVLSLSDSQGYVYEPNGFTREQLQAVQDMKKKNNSARISEYKSDTAVYVGDRRKPWELDCQVDIAFPCATQNEIDEHDAELLIKHGCQYVVEGANMPSTNEAIHKYNKAGIIYCPGKAANAGGVAVSGLEMTQNRMSLNWTREEVRDKLERIMKDIYDSAMGPSREYNVDLAAGANIAGFTKVADAVKAQGAV.

The tract at residues 26–50 is disordered; the sequence is CARGRSAKRDVAAKRLRSRSPRMDA. Residue Lys-202 is part of the active site.

It belongs to the Glu/Leu/Phe/Val dehydrogenases family. Homo- and heterohexamer of alpha and beta subunits. Both subunits are encoded by the same gene. The N-termini of the alpha and the beta chains are blocked.

The protein localises to the plastid. Its subcellular location is the chloroplast. It carries out the reaction L-glutamate + NADP(+) + H2O = 2-oxoglutarate + NH4(+) + NADPH + H(+). This chain is NADP-specific glutamate dehydrogenase, found in Chlorella sorokiniana (Freshwater green alga).